A 268-amino-acid polypeptide reads, in one-letter code: Glutamate racemase (268 aa).

Substrate-binding positions include 13–14 (DS) and 45–46 (YG). Residue Cys77 is the Proton donor/acceptor of the active site. 78 to 79 (NT) is a substrate binding site. Residue Cys185 is the Proton donor/acceptor of the active site. 186–187 (TH) is a substrate binding site.

It belongs to the aspartate/glutamate racemases family.

The enzyme catalyses L-glutamate = D-glutamate. It participates in cell wall biogenesis; peptidoglycan biosynthesis. Provides the (R)-glutamate required for cell wall biosynthesis. In Vibrio campbellii (strain ATCC BAA-1116), this protein is Glutamate racemase.